A 453-amino-acid chain; its full sequence is Ribosome biogenesis protein SSF1 (453 aa).

The segment covering 1–11 has biased composition (basic residues); sequence MAKRRQKKRTH. Disordered regions lie at residues 1 to 22, 275 to 324, and 374 to 453; these read MAKRRQKKRTHAQLTPEQEQGI, KAKH…PRKK, and KMRL…SEVE. The 323-residue stretch at 26-348 folds into the Brix domain; it reads MVIRVGQTSL…LVKIEEGICS (323 aa). Basic and acidic residues predominate over residues 288–300; the sequence is PVEKKDNKEREKE. Position 301 is a phosphothreonine (threonine 301). Positions 374-398 are enriched in basic and acidic residues; that stretch reads KMRLKEQRKKEQEENIAKKKAVKDA. Positions 399-409 are enriched in basic residues; that stretch reads KKQRKLERRKA. A compositionally biased stretch (basic and acidic residues) spans 410–423; the sequence is RAAEGGEGQGKDDA. Residues 442-453 are compositionally biased toward acidic residues; it reads EDLDSDLFSEVE.

Part of a complex that includes BRX1, RPF1, RPF2 and SSF1 or SSF2.

The protein localises to the nucleus. The protein resides in the nucleolus. Functionally, required for biogenesis of the 60S ribosomal subunit. The sequence is that of Ribosome biogenesis protein SSF1 (SSF1) from Saccharomyces cerevisiae (strain ATCC 204508 / S288c) (Baker's yeast).